The sequence spans 172 residues: Adenine phosphoribosyltransferase (172 aa).

The protein belongs to the purine/pyrimidine phosphoribosyltransferase family. In terms of assembly, homodimer.

It localises to the cytoplasm. The catalysed reaction is AMP + diphosphate = 5-phospho-alpha-D-ribose 1-diphosphate + adenine. It participates in purine metabolism; AMP biosynthesis via salvage pathway; AMP from adenine: step 1/1. Functionally, catalyzes a salvage reaction resulting in the formation of AMP, that is energically less costly than de novo synthesis. The chain is Adenine phosphoribosyltransferase from Nostoc punctiforme (strain ATCC 29133 / PCC 73102).